Consider the following 371-residue polypeptide: 4-hydroxyprotoasukamycin monooxygenase (371 aa).

Belongs to the bacterial luciferase oxidoreductase family. FMN is required as a cofactor.

The catalysed reaction is 4-hydroxyprotoasukamycin + NADH + O2 + H(+) = asukamycin + NAD(+) + H2O. It functions in the pathway antibiotic biosynthesis. Its function is as follows. Involved in the biosynthesis of the antibiotic asukamycin. Catalyzes the epoxidation of 4-hydroxyprotoasukamycin to the final product, asukamycin. Can also convert some 4-hydroxyprotoasukamycin derivatives to their asukamycin derivatives, but cannot use protoasukamycin as substrate. Can also use NADPH, but catalytic efficiency is 20-fold higher with NADH. The chain is 4-hydroxyprotoasukamycin monooxygenase from Streptomyces nodosus subsp. asukaensis.